Consider the following 364-residue polypeptide: C2 calcium-dependent domain-containing protein 4A (364 aa).

Disordered regions lie at residues 118–175 (GSPS…PPRC) and 192–242 (AGRS…RPER). The segment covering 220–233 (SPGSPTQAPVTSLS) has biased composition (polar residues). Positions 254–364 (AGGALRLAAE…ELLLGPLLLL (111 aa)) constitute a C2 domain.

It belongs to the C2CD4 family.

The protein resides in the nucleus. Its function is as follows. May be involved in inflammatory process. May regulate cell architecture and adhesion. This is C2 calcium-dependent domain-containing protein 4A (C2CD4A) from Bos taurus (Bovine).